Reading from the N-terminus, the 954-residue chain is Glycine dehydrogenase (decarboxylating) (954 aa).

Lys704 is modified (N6-(pyridoxal phosphate)lysine).

This sequence belongs to the GcvP family. As to quaternary structure, the glycine cleavage system is composed of four proteins: P, T, L and H. Pyridoxal 5'-phosphate serves as cofactor.

It catalyses the reaction N(6)-[(R)-lipoyl]-L-lysyl-[glycine-cleavage complex H protein] + glycine + H(+) = N(6)-[(R)-S(8)-aminomethyldihydrolipoyl]-L-lysyl-[glycine-cleavage complex H protein] + CO2. Functionally, the glycine cleavage system catalyzes the degradation of glycine. The P protein binds the alpha-amino group of glycine through its pyridoxal phosphate cofactor; CO(2) is released and the remaining methylamine moiety is then transferred to the lipoamide cofactor of the H protein. This is Glycine dehydrogenase (decarboxylating) from Allorhizobium ampelinum (strain ATCC BAA-846 / DSM 112012 / S4) (Agrobacterium vitis (strain S4)).